The sequence spans 252 residues: Imidazole glycerol phosphate synthase subunit HisF (252 aa).

Catalysis depends on residues Asp13 and Asp132.

The protein belongs to the HisA/HisF family. Heterodimer of HisH and HisF.

Its subcellular location is the cytoplasm. It catalyses the reaction 5-[(5-phospho-1-deoxy-D-ribulos-1-ylimino)methylamino]-1-(5-phospho-beta-D-ribosyl)imidazole-4-carboxamide + L-glutamine = D-erythro-1-(imidazol-4-yl)glycerol 3-phosphate + 5-amino-1-(5-phospho-beta-D-ribosyl)imidazole-4-carboxamide + L-glutamate + H(+). Its pathway is amino-acid biosynthesis; L-histidine biosynthesis; L-histidine from 5-phospho-alpha-D-ribose 1-diphosphate: step 5/9. In terms of biological role, IGPS catalyzes the conversion of PRFAR and glutamine to IGP, AICAR and glutamate. The HisF subunit catalyzes the cyclization activity that produces IGP and AICAR from PRFAR using the ammonia provided by the HisH subunit. In Campylobacter hominis (strain ATCC BAA-381 / DSM 21671 / CCUG 45161 / LMG 19568 / NCTC 13146 / CH001A), this protein is Imidazole glycerol phosphate synthase subunit HisF.